A 450-amino-acid polypeptide reads, in one-letter code: Na(+)/H(+) antiporter NhaA (450 aa).

11 helical membrane passes run 24-44 (FFAI…LALV), 75-95 (LILW…GLEI), 111-131 (ALPI…YLAL), 140-160 (GWGV…SLLG), 169-189 (VFLT…IAFF), 196-216 (FSFL…NWLG), 224-244 (LLVG…ATIA), 318-338 (WVAW…TVSA), 352-372 (IFFG…WLLV), 390-410 (GIGW…TLAF), and 422-442 (SILC…RVLL).

The protein belongs to the NhaA Na(+)/H(+) (TC 2.A.33) antiporter family.

The protein localises to the cell inner membrane. The enzyme catalyses Na(+)(in) + 2 H(+)(out) = Na(+)(out) + 2 H(+)(in). In terms of biological role, na(+)/H(+) antiporter that extrudes sodium in exchange for external protons. This chain is Na(+)/H(+) antiporter NhaA, found in Oleidesulfovibrio alaskensis (strain ATCC BAA-1058 / DSM 17464 / G20) (Desulfovibrio alaskensis).